An 880-amino-acid polypeptide reads, in one-letter code: Alanine--tRNA ligase (880 aa).

4 residues coordinate Zn(2+): histidine 567, histidine 571, cysteine 669, and histidine 673.

Belongs to the class-II aminoacyl-tRNA synthetase family. Zn(2+) is required as a cofactor.

The protein localises to the cytoplasm. It catalyses the reaction tRNA(Ala) + L-alanine + ATP = L-alanyl-tRNA(Ala) + AMP + diphosphate. Catalyzes the attachment of alanine to tRNA(Ala) in a two-step reaction: alanine is first activated by ATP to form Ala-AMP and then transferred to the acceptor end of tRNA(Ala). Also edits incorrectly charged Ser-tRNA(Ala) and Gly-tRNA(Ala) via its editing domain. In Bacillus thuringiensis subsp. konkukian (strain 97-27), this protein is Alanine--tRNA ligase.